The sequence spans 191 residues: Small ribosomal subunit protein uS5 (191 aa).

A disordered region spans residues 1-20 (MAGERERGGRERSRDREERD). One can recognise an S5 DRBM domain in the interval 23–86 (FVDKLVHINR…ESAKRNLTRV (64 aa)).

It belongs to the universal ribosomal protein uS5 family. As to quaternary structure, part of the 30S ribosomal subunit. Contacts proteins S4 and S8.

Its function is as follows. With S4 and S12 plays an important role in translational accuracy. In terms of biological role, located at the back of the 30S subunit body where it stabilizes the conformation of the head with respect to the body. The protein is Small ribosomal subunit protein uS5 of Nitrobacter winogradskyi (strain ATCC 25391 / DSM 10237 / CIP 104748 / NCIMB 11846 / Nb-255).